A 738-amino-acid polypeptide reads, in one-letter code: 1,4-alpha-glucan branching enzyme GlgB (738 aa).

The Nucleophile role is filled by aspartate 417. Residue glutamate 472 is the Proton donor of the active site.

This sequence belongs to the glycosyl hydrolase 13 family. GlgB subfamily. Monomer.

The catalysed reaction is Transfers a segment of a (1-&gt;4)-alpha-D-glucan chain to a primary hydroxy group in a similar glucan chain.. The protein operates within glycan biosynthesis; glycogen biosynthesis. In terms of biological role, catalyzes the formation of the alpha-1,6-glucosidic linkages in glycogen by scission of a 1,4-alpha-linked oligosaccharide from growing alpha-1,4-glucan chains and the subsequent attachment of the oligosaccharide to the alpha-1,6 position. The sequence is that of 1,4-alpha-glucan branching enzyme GlgB from Burkholderia pseudomallei (strain K96243).